Reading from the N-terminus, the 455-residue chain is Putative FBD-associated F-box protein At5g56400 (455 aa).

The F-box domain maps to 32–81; sequence VDKISDLPEDLLVHILSLLPTTNDIVATSGVSKRWESLWTKVHKLRFNDR. One can recognise an FBD domain in the interval 372-421; sequence WNQQPSYVPECLTKSLEIFEWRNYKATFRERDVAVYILKNSTCLKKTVIS.

The protein is Putative FBD-associated F-box protein At5g56400 of Arabidopsis thaliana (Mouse-ear cress).